A 239-amino-acid chain; its full sequence is Purine nucleoside phosphorylase DeoD-type (239 aa).

His5 lines the a purine D-ribonucleoside pocket. The phosphate site is built by Gly21 and Arg25. Lys27 carries the post-translational modification N6-acetyllysine. Phosphate contacts are provided by residues Arg44 and 88 to 91 (RVGS). Residues 180-182 (EME) and 204-205 (SD) contribute to the a purine D-ribonucleoside site. The active-site Proton donor is Asp205.

Belongs to the PNP/UDP phosphorylase family. As to quaternary structure, homohexamer; trimer of homodimers.

The catalysed reaction is a purine D-ribonucleoside + phosphate = a purine nucleobase + alpha-D-ribose 1-phosphate. The enzyme catalyses a purine 2'-deoxy-D-ribonucleoside + phosphate = a purine nucleobase + 2-deoxy-alpha-D-ribose 1-phosphate. In terms of biological role, catalyzes the reversible phosphorolytic breakdown of the N-glycosidic bond in the beta-(deoxy)ribonucleoside molecules, with the formation of the corresponding free purine bases and pentose-1-phosphate. The protein is Purine nucleoside phosphorylase DeoD-type of Escherichia coli O81 (strain ED1a).